The chain runs to 339 residues: DNA-directed RNA polymerase subunit alpha (339 aa).

The alpha N-terminal domain (alpha-NTD) stretch occupies residues 1 to 235 (MTIQKNWQEL…DQLNVFVNFE (235 aa)). Residues 251–339 (FNPAFLKKVD…ELAKRFEDHY (89 aa)) are alpha C-terminal domain (alpha-CTD).

This sequence belongs to the RNA polymerase alpha chain family. Homodimer. The RNAP catalytic core consists of 2 alpha, 1 beta, 1 beta' and 1 omega subunit. When a sigma factor is associated with the core the holoenzyme is formed, which can initiate transcription.

The catalysed reaction is RNA(n) + a ribonucleoside 5'-triphosphate = RNA(n+1) + diphosphate. DNA-dependent RNA polymerase catalyzes the transcription of DNA into RNA using the four ribonucleoside triphosphates as substrates. The polypeptide is DNA-directed RNA polymerase subunit alpha (Afipia carboxidovorans (strain ATCC 49405 / DSM 1227 / KCTC 32145 / OM5) (Oligotropha carboxidovorans)).